We begin with the raw amino-acid sequence, 260 residues long: NH(3)-dependent NAD(+) synthetase (260 aa).

Residue 31-38 participates in ATP binding; that stretch reads GLSGGLDS. Mg(2+) is bound at residue Asp37. Arg112 is a deamido-NAD(+) binding site. Thr132 lines the ATP pocket. Glu137 provides a ligand contact to Mg(2+). Residues Lys161 and Ser183 each coordinate ATP.

The protein belongs to the NAD synthetase family. As to quaternary structure, homodimer.

It carries out the reaction deamido-NAD(+) + NH4(+) + ATP = AMP + diphosphate + NAD(+) + H(+). It functions in the pathway cofactor biosynthesis; NAD(+) biosynthesis; NAD(+) from deamido-NAD(+) (ammonia route): step 1/1. In terms of biological role, catalyzes the ATP-dependent amidation of deamido-NAD to form NAD. Uses ammonia as a nitrogen source. In Helicobacter acinonychis (strain Sheeba), this protein is NH(3)-dependent NAD(+) synthetase.